A 343-amino-acid chain; its full sequence is Armadillo repeat-containing protein 10 (343 aa).

A helical transmembrane segment spans residues 5–27; it reads RGAGWVAAGLLLGAGACYCIYRL. A disordered region spans residues 43–83; that stretch reads SKSAGALEEGTSEGQLCGRSARPQTGGTWESQWSKTSQPED. At S45 the chain carries Phosphoserine. At E50 the chain carries Phosphothreonine. Residues 64 to 82 are compositionally biased toward polar residues; the sequence is RPQTGGTWESQWSKTSQPE. T85 carries the phosphothreonine modification. The ARM repeat unit spans residues 138-180; that stretch reads GGIPIVANKINHSNQSIKEKALNALNNLSVNVENQIKIKIYIS.

Interacts with the DNA-binding domain of p53/TP53. As to expression, expressed in all tissues tested with higher expression in placenta, liver, kidney, heart and brain.

Its subcellular location is the endoplasmic reticulum membrane. It localises to the mitochondrion outer membrane. Its function is as follows. May play a role in cell survival and cell growth. May suppress the transcriptional activity of p53/TP53. The sequence is that of Armadillo repeat-containing protein 10 (ARMC10) from Homo sapiens (Human).